The chain runs to 331 residues: Decarboxylase orsB (331 aa).

The Zn(2+) site is built by histidine 11, histidine 157, and aspartate 284.

Belongs to the metallo-dependent hydrolases superfamily. ACMSD family.

It functions in the pathway secondary metabolite biosynthesis. Functionally, decarboxylase; part of the gene cluster that mediates the biosynthesis of orsellinic acid, as well as of the cathepsin K inhibitors F9775 A and F9775 B. The non-reducing polyketide synthase orsA produces orsellinic acid by condensing acetyl-CoA with 3 malonyl-CoA units. Further modifications by the decarboxylase orsB and the tyrosinase-like protein orsC lead to the production of F9775 A and F9775 B. The functions of orsD and orsE remain unclear since only orsB and orsC are required to convert orsellinic acid into F9775 A and F9775 B. This chain is Decarboxylase orsB, found in Emericella nidulans (strain FGSC A4 / ATCC 38163 / CBS 112.46 / NRRL 194 / M139) (Aspergillus nidulans).